Reading from the N-terminus, the 264-residue chain is Thiazole synthase (264 aa).

K106 serves as the catalytic Schiff-base intermediate with DXP. Residues G167, A193–G194, and N215–S216 each bind 1-deoxy-D-xylulose 5-phosphate.

The protein belongs to the ThiG family. In terms of assembly, homotetramer. Forms heterodimers with either ThiH or ThiS.

It is found in the cytoplasm. The catalysed reaction is [ThiS sulfur-carrier protein]-C-terminal-Gly-aminoethanethioate + 2-iminoacetate + 1-deoxy-D-xylulose 5-phosphate = [ThiS sulfur-carrier protein]-C-terminal Gly-Gly + 2-[(2R,5Z)-2-carboxy-4-methylthiazol-5(2H)-ylidene]ethyl phosphate + 2 H2O + H(+). The protein operates within cofactor biosynthesis; thiamine diphosphate biosynthesis. Functionally, catalyzes the rearrangement of 1-deoxy-D-xylulose 5-phosphate (DXP) to produce the thiazole phosphate moiety of thiamine. Sulfur is provided by the thiocarboxylate moiety of the carrier protein ThiS. In vitro, sulfur can be provided by H(2)S. This is Thiazole synthase from Prochlorococcus marinus (strain MIT 9312).